We begin with the raw amino-acid sequence, 165 residues long: Putative pre-16S rRNA nuclease (165 aa).

The protein belongs to the YqgF nuclease family.

It is found in the cytoplasm. Functionally, could be a nuclease involved in processing of the 5'-end of pre-16S rRNA. The sequence is that of Putative pre-16S rRNA nuclease from Brucella anthropi (strain ATCC 49188 / DSM 6882 / CCUG 24695 / JCM 21032 / LMG 3331 / NBRC 15819 / NCTC 12168 / Alc 37) (Ochrobactrum anthropi).